The chain runs to 209 residues: Uracil phosphoribosyltransferase (209 aa).

5-phospho-alpha-D-ribose 1-diphosphate contacts are provided by residues Arg-79, Arg-104, and 131–139; that span reads DPMLATGNS. Uracil is bound by residues Ile-194 and 199–201; that span reads GDA. 5-phospho-alpha-D-ribose 1-diphosphate is bound at residue Asp-200.

Belongs to the UPRTase family. It depends on Mg(2+) as a cofactor.

The catalysed reaction is UMP + diphosphate = 5-phospho-alpha-D-ribose 1-diphosphate + uracil. The protein operates within pyrimidine metabolism; UMP biosynthesis via salvage pathway; UMP from uracil: step 1/1. With respect to regulation, allosterically activated by GTP. Catalyzes the conversion of uracil and 5-phospho-alpha-D-ribose 1-diphosphate (PRPP) to UMP and diphosphate. In Rhodococcus jostii (strain RHA1), this protein is Uracil phosphoribosyltransferase.